A 73-amino-acid chain; its full sequence is Salivary thrombin inhibitor XC-42 (73 aa).

Residues 1-23 (MKLQFLFIFIAFCVMLFAQIATA) form the signal peptide.

In terms of assembly, interacts with human F2 (thrombin). In terms of tissue distribution, salivary gland (at protein level).

Its subcellular location is the secreted. Functionally, acts as a competitive inhibitor of host thrombin. The sequence is that of Salivary thrombin inhibitor XC-42 from Xenopsylla cheopis (Oriental rat flea).